The following is a 344-amino-acid chain: Dimethyladenosine transferase 1, mitochondrial (344 aa).

The transit peptide at 1-27 (MATPGALAKFRLPPLPTIGEIVKLFNL) directs the protein to the mitochondrion. The S-adenosyl-L-methionine site is built by Asn-36, Leu-38, Gly-63, Glu-85, Lys-86, Asp-111, Ile-112, and Asn-141.

This sequence belongs to the class I-like SAM-binding methyltransferase superfamily. rRNA adenine N(6)-methyltransferase family. KsgA subfamily.

The protein resides in the mitochondrion. The enzyme catalyses adenosine(N)/adenosine(N+1) in rRNA + 4 S-adenosyl-L-methionine = N(6)-dimethyladenosine(N)/N(6)-dimethyladenosine(N+1) in rRNA + 4 S-adenosyl-L-homocysteine + 4 H(+). In terms of biological role, mitochondrial methyltransferase which uses S-adenosyl methionine to dimethylate two highly conserved adjacent adenosine residues (A1583 and A1584) within the loop of helix 45 at the 3-prime end of 12S rRNA, thereby regulating the assembly or stability of the small subunit of the mitochondrial ribosome. Also required for basal transcription of mitochondrial DNA, probably via its interaction with POLRMT and TFAM. Stimulates transcription independently of the methyltransferase activity. This is Dimethyladenosine transferase 1, mitochondrial (tfb1m.L) from Xenopus laevis (African clawed frog).